Reading from the N-terminus, the 185-residue chain is Elongation factor P (185 aa).

This sequence belongs to the elongation factor P family.

It localises to the cytoplasm. It functions in the pathway protein biosynthesis; polypeptide chain elongation. Functionally, involved in peptide bond synthesis. Stimulates efficient translation and peptide-bond synthesis on native or reconstituted 70S ribosomes in vitro. Probably functions indirectly by altering the affinity of the ribosome for aminoacyl-tRNA, thus increasing their reactivity as acceptors for peptidyl transferase. In Pseudothermotoga lettingae (strain ATCC BAA-301 / DSM 14385 / NBRC 107922 / TMO) (Thermotoga lettingae), this protein is Elongation factor P.